The sequence spans 437 residues: Histidine--tRNA ligase (437 aa).

Belongs to the class-II aminoacyl-tRNA synthetase family. In terms of assembly, homodimer.

The protein localises to the cytoplasm. The enzyme catalyses tRNA(His) + L-histidine + ATP = L-histidyl-tRNA(His) + AMP + diphosphate + H(+). The protein is Histidine--tRNA ligase of Opitutus terrae (strain DSM 11246 / JCM 15787 / PB90-1).